Reading from the N-terminus, the 1097-residue chain is DNA-directed RNA polymerase subunit beta (1097 aa).

The segment at 1072–1097 (QDINPRRNTPSRPTYESLGTSEYEED) is disordered. Residues 1077 to 1091 (RRNTPSRPTYESLGT) show a composition bias toward polar residues.

Belongs to the RNA polymerase beta chain family. In cyanobacteria the RNAP catalytic core is composed of 2 alpha, 1 beta, 1 beta', 1 gamma and 1 omega subunit. When a sigma factor is associated with the core the holoenzyme is formed, which can initiate transcription.

It catalyses the reaction RNA(n) + a ribonucleoside 5'-triphosphate = RNA(n+1) + diphosphate. Its function is as follows. DNA-dependent RNA polymerase catalyzes the transcription of DNA into RNA using the four ribonucleoside triphosphates as substrates. The chain is DNA-directed RNA polymerase subunit beta from Prochlorococcus marinus (strain AS9601).